A 509-amino-acid chain; its full sequence is Ceramide glucosyltransferase (509 aa).

The Lumenal segment spans residues 1–42 (MIMQLGLTSLAFLALKCDAYNIAPKIDTPNVEPFAPSGGLKL). A helical membrane pass occupies residues 43–63 (LAIVAIIWYVVVLLVAYYGFF). Topologically, residues 64 to 384 (EIMQKFSKRK…EATLLEPTTE (321 aa)) are cytoplasmic. D123 is a short sequence motif (D1). Residue D179 is a short sequence motif, D2. A short sequence motif (D3) is located at residue D321. The active-site Proton acceptor is the D321. Positions 361-365 (RRIRW) match the (Q/R)XXRW motif. A helical transmembrane segment spans residues 385–405 (CLLCGTFGTFAISTLFLQSYF). Over 406–408 (NWK) the chain is Lumenal. The helical transmembrane segment at 409–429 (FFIFHLLVWMVTDYTQFHILL) threads the bilayer. The Cytoplasmic segment spans residues 430–466 (TNASQDTATCNVPYFAEPNFNAYGSPFESSNLRTFHR). A helical transmembrane segment spans residues 467-487 (WVLYWLLREVLALPIWISAML). Topologically, residues 488 to 509 (GTRIIWRNRPFRINVDLSAEEL) are lumenal.

It belongs to the glycosyltransferase 2 family.

Its subcellular location is the golgi apparatus membrane. It carries out the reaction an N-acylsphing-4-enine + UDP-alpha-D-glucose = a beta-D-glucosyl-(1&lt;-&gt;1')-N-acylsphing-4-enine + UDP + H(+). It participates in lipid metabolism; sphingolipid metabolism. Catalyzes the final step in the biosynthesis of the membrane lipid glucosylceramide (GluCer), the transfer of glucose to ceramide. Glucosylceramides play important roles in growth, differentiation and pathogenicity. This chain is Ceramide glucosyltransferase, found in Komagataella phaffii (strain GS115 / ATCC 20864) (Yeast).